Reading from the N-terminus, the 431-residue chain is Serine/threonine-protein kinase Sgk1 (431 aa).

The necessary for localization to the mitochondria stretch occupies residues 1–60; sequence MTVKTEAAKGTLTYSRMRGMVAILIAFMKQRRMGLNDFIQKIANNSYACKHPEVQSILKI. Positions 66 to 92 are disordered; sequence PELMNANPSPPPSPSQQINLGPSSNPH. At Ser-74 the chain carries Phosphoserine. Ser-78 is modified (phosphoserine; by MAPK7). Residues 81–91 are compositionally biased toward polar residues; the sequence is QQINLGPSSNP. Residues 98–355 enclose the Protein kinase domain; that stretch reads FHFLKVIGKG…FMEIKSHVFF (258 aa). ATP-binding positions include 104–112 and Lys-127; that span reads IGKGSFGKV. The Nuclear localization signal motif lies at 131–141; the sequence is KKAILKKKEEK. Asp-222 acts as the Proton acceptor in catalysis. The residue at position 256 (Thr-256) is a Phosphothreonine; by PDPK1. Residues 356–431 form the AGC-kinase C-terminal domain; sequence SLINWDDLIN…SYAPPTDSFL (76 aa). Phosphothreonine; by PKA is present on Thr-369. Phosphoserine is present on residues Ser-397, Ser-401, and Ser-422.

The protein belongs to the protein kinase superfamily. AGC Ser/Thr protein kinase family. In terms of assembly, homodimer; disulfide-linked. Forms a trimeric complex with FBXW7 and NOTCH1. Interacts with MAPK3/ERK1, MAPK1/ERK2, MAP2K1/MEK1, MAP2K2/MEK2, NEDD4, NEDD4L, MAPT/TAU, MAPK7, CREB1, SLC9A3R2/NHERF2 and KCNJ1/ROMK1. Associates with the mammalian target of rapamycin complex 2 (mTORC2) via an interaction with MAPKAP1/SIN1. Post-translationally, regulated by phosphorylation. Activated by phosphorylation on Ser-422 by mTORC2, transforming it into a substrate for PDPK1 which phosphorylates it on Thr-256. Phosphorylation on Ser-397 and Ser-401 are also essential for its activity. Phosphorylation on Ser-78 by MAPK7 is required for growth factor-induced cell cycle progression. Ubiquitinated by NEDD4L; which promotes proteasomal degradation. Ubiquitinated by SYVN1 at the endoplasmic reticulum; which promotes rapid proteasomal degradation and maintains a high turnover rate in resting cells. Isoform 2 shows enhanced stability. Expressed in most tissues with highest levels in the pancreas, followed by placenta, kidney and lung. Isoform 2 is strongly expressed in brain and pancreas, weaker in heart, placenta, lung, liver and skeletal muscle.

The protein localises to the cytoplasm. The protein resides in the nucleus. It localises to the endoplasmic reticulum membrane. It is found in the cell membrane. Its subcellular location is the mitochondrion. It carries out the reaction L-seryl-[protein] + ATP = O-phospho-L-seryl-[protein] + ADP + H(+). The catalysed reaction is L-threonyl-[protein] + ATP = O-phospho-L-threonyl-[protein] + ADP + H(+). With respect to regulation, two specific sites, one in the kinase domain (Thr-256) and the other in the C-terminal regulatory region (Ser-422), need to be phosphorylated for its full activation. Phosphorylation at Ser-397 and Ser-401 are also essential for its activity. Activated by WNK1, WNK2, WNK3 and WNK4; which promote phosphorylation by mTORC2. Functionally, serine/threonine-protein kinase which is involved in the regulation of a wide variety of ion channels, membrane transporters, cellular enzymes, transcription factors, neuronal excitability, cell growth, proliferation, survival, migration and apoptosis. Plays an important role in cellular stress response. Contributes to regulation of renal Na(+) retention, renal K(+) elimination, salt appetite, gastric acid secretion, intestinal Na(+)/H(+) exchange and nutrient transport, insulin-dependent salt sensitivity of blood pressure, salt sensitivity of peripheral glucose uptake, cardiac repolarization and memory consolidation. Up-regulates Na(+) channels: SCNN1A/ENAC, SCN5A and ASIC1/ACCN2, K(+) channels: KCNJ1/ROMK1, KCNA1-5, KCNQ1-5 and KCNE1, epithelial Ca(2+) channels: TRPV5 and TRPV6, chloride channels: BSND, CLCN2 and CFTR, glutamate transporters: SLC1A3/EAAT1, SLC1A2 /EAAT2, SLC1A1/EAAT3, SLC1A6/EAAT4 and SLC1A7/EAAT5, amino acid transporters: SLC1A5/ASCT2, SLC38A1/SN1 and SLC6A19, creatine transporter: SLC6A8, Na(+)/dicarboxylate cotransporter: SLC13A2/NADC1, Na(+)-dependent phosphate cotransporter: SLC34A2/NAPI-2B, glutamate receptor: GRIK2/GLUR6. Up-regulates carriers: SLC9A3/NHE3, SLC12A1/NKCC2, SLC12A3/NCC, SLC5A3/SMIT, SLC2A1/GLUT1, SLC5A1/SGLT1 and SLC15A2/PEPT2. Regulates enzymes: GSK3A/B, PMM2 and Na(+)/K(+) ATPase, and transcription factors: CTNNB1 and nuclear factor NF-kappa-B. Stimulates sodium transport into epithelial cells by enhancing the stability and expression of SCNN1A/ENAC. This is achieved by phosphorylating the NEDD4L ubiquitin E3 ligase, promoting its interaction with 14-3-3 proteins, thereby preventing it from binding to SCNN1A/ENAC and targeting it for degradation. Regulates store-operated Ca(+2) entry (SOCE) by stimulating ORAI1 and STIM1. Regulates KCNJ1/ROMK1 directly via its phosphorylation or indirectly via increased interaction with SLC9A3R2/NHERF2. Phosphorylates MDM2 and activates MDM2-dependent ubiquitination of p53/TP53. Phosphorylates MAPT/TAU and mediates microtubule depolymerization and neurite formation in hippocampal neurons. Phosphorylates SLC2A4/GLUT4 and up-regulates its activity. Phosphorylates APBB1/FE65 and promotes its localization to the nucleus. Phosphorylates MAPK1/ERK2 and activates it by enhancing its interaction with MAP2K1/MEK1 and MAP2K2/MEK2. Phosphorylates FBXW7 and plays an inhibitory role in the NOTCH1 signaling. Phosphorylates FOXO1 resulting in its relocalization from the nucleus to the cytoplasm. Phosphorylates FOXO3, promoting its exit from the nucleus and interference with FOXO3-dependent transcription. Phosphorylates BRAF and MAP3K3/MEKK3 and inhibits their activity. Phosphorylates SLC9A3/NHE3 in response to dexamethasone, resulting in its activation and increased localization at the cell membrane. Phosphorylates CREB1. Necessary for vascular remodeling during angiogenesis. Sustained high levels and activity may contribute to conditions such as hypertension and diabetic nephropathy. Isoform 2 exhibited a greater effect on cell plasma membrane expression of SCNN1A/ENAC and Na(+) transport than isoform 1. The polypeptide is Serine/threonine-protein kinase Sgk1 (SGK1) (Homo sapiens (Human)).